Reading from the N-terminus, the 557-residue chain is MQPVLFRTLSLGVAIAAASSSAFAATLDGGAVAAPDEYGAKVAAQILKAGGNAVDAAVATAFTLAVTYPEAGNIGGGGFMTLYMDGKPYFLDYREVAPKAASKTMYLDDKGEVIENLSLVGAKAAGVPGTVMGLWEAHKRFGKLPWSELLTPAIGYAQKGFKVADKQFQYRQDAVALFNGKTNFGDYFGHMKAGEAFLQPDLAKTLERIADKGPDEFYKGHTADLLVAQMQQDKGLITHQDLADYKVRWREPMRVDWQGNTLYTAPLPSSGGIALAQLLGIKENRAADFKGVELNSARYIHLLAEIEKRVFADRADYLGDPDFSKVPVARLTDPAYLKQRAAEVNPTAISPTEKVRPGLEPHQTTHFSIVDADGNAVSNTYTLNWDFGSGVVVKGAGFLLNDEMDDFSAKPGVANAFGVVGSDANAIEPGKRMLSSMSPSIVTRDGKVSLVVGTPGGSRIFTSIFQVLNNIYDFHLPLEKAVAAQRVHHQLLPKDTIYYDAYAPLAGKVAEELKAMGYTLEDQGWNMGDIQAIRVDGKALETASDPRGRGVGLVVKP.

Residues 1–24 (MQPVLFRTLSLGVAIAAASSSAFA) form the signal peptide. Arg94 is a binding site for L-glutamate. The active-site Nucleophile is Thr364. Residues Thr382, Asn384, Glu403, Asp406, 435 to 436 (SS), and 456 to 457 (GG) contribute to the L-glutamate site.

It belongs to the gamma-glutamyltransferase family. In terms of assembly, this enzyme consists of two polypeptide chains, which are synthesized in precursor form from a single polypeptide. In terms of processing, cleaved by autocatalysis into a large and a small subunit.

The protein localises to the periplasm. It catalyses the reaction an N-terminal (5-L-glutamyl)-[peptide] + an alpha-amino acid = 5-L-glutamyl amino acid + an N-terminal L-alpha-aminoacyl-[peptide]. The catalysed reaction is glutathione + H2O = L-cysteinylglycine + L-glutamate. It carries out the reaction an S-substituted glutathione + H2O = an S-substituted L-cysteinylglycine + L-glutamate. Its pathway is sulfur metabolism; glutathione metabolism. This Pseudomonas aeruginosa (strain ATCC 15692 / DSM 22644 / CIP 104116 / JCM 14847 / LMG 12228 / 1C / PRS 101 / PAO1) protein is Glutathione hydrolase proenzyme (ggt).